A 404-amino-acid polypeptide reads, in one-letter code: MSHSRYYFTSESVSEGHPDKVADQISDAVLDEFIKQDPNSRVACETFVTTGQVIVGGEVTSKGIVDVQTIARKTITEIGYTKGEYMFDANSCGILSALHSQSPDINRGVDRKEEIADEFDRVGAGDQGMMFGYACTETPELMPAAIQYAQELVRLLAEIRKEGKIMTYLRPDAKSQVTLEYDGNDNVLRVEAVVVSTQHDPEPAGMSEAEFQAVIKNDVIENVIKKVIPAKLIDENTKFHINPTGRFEIGGPHGDTGLTGRKIIVDTYGGAAPHGGGAFSGKDPSKVDRSAAYAARHVAKNIVAAGLADKCTVQVSYAIGVARPISIYINTHGTSKHGLSDEQIQEKAEAIFDLRPLAIIRRFNLDRPHGWCYRDTAAYGHFGREQFPWEKTEKVAELKAALGL.

His17 contributes to the ATP binding site. Position 19 (Asp19) interacts with Mg(2+). Glu45 serves as a coordination point for K(+). 2 residues coordinate L-methionine: Glu58 and Gln101. A flexible loop region spans residues 101–111; it reads QSPDINRGVDR. Residues 172–174, 246–247, Asp255, 261–262, Ala278, and Lys282 contribute to the ATP site; these read DAK, RF, and RK. Asp255 is an L-methionine binding site. L-methionine is bound at residue Lys286.

It belongs to the AdoMet synthase family. In terms of assembly, homotetramer; dimer of dimers. Mg(2+) serves as cofactor. It depends on K(+) as a cofactor.

It is found in the cytoplasm. The enzyme catalyses L-methionine + ATP + H2O = S-adenosyl-L-methionine + phosphate + diphosphate. The protein operates within amino-acid biosynthesis; S-adenosyl-L-methionine biosynthesis; S-adenosyl-L-methionine from L-methionine: step 1/1. Its function is as follows. Catalyzes the formation of S-adenosylmethionine (AdoMet) from methionine and ATP. The overall synthetic reaction is composed of two sequential steps, AdoMet formation and the subsequent tripolyphosphate hydrolysis which occurs prior to release of AdoMet from the enzyme. The protein is S-adenosylmethionine synthase of Chlorobaculum tepidum (strain ATCC 49652 / DSM 12025 / NBRC 103806 / TLS) (Chlorobium tepidum).